Reading from the N-terminus, the 95-residue chain is Aspartyl/glutamyl-tRNA(Asn/Gln) amidotransferase subunit C (95 aa).

The protein belongs to the GatC family. As to quaternary structure, heterotrimer of A, B and C subunits.

The catalysed reaction is L-glutamyl-tRNA(Gln) + L-glutamine + ATP + H2O = L-glutaminyl-tRNA(Gln) + L-glutamate + ADP + phosphate + H(+). The enzyme catalyses L-aspartyl-tRNA(Asn) + L-glutamine + ATP + H2O = L-asparaginyl-tRNA(Asn) + L-glutamate + ADP + phosphate + 2 H(+). Its function is as follows. Allows the formation of correctly charged Asn-tRNA(Asn) or Gln-tRNA(Gln) through the transamidation of misacylated Asp-tRNA(Asn) or Glu-tRNA(Gln) in organisms which lack either or both of asparaginyl-tRNA or glutaminyl-tRNA synthetases. The reaction takes place in the presence of glutamine and ATP through an activated phospho-Asp-tRNA(Asn) or phospho-Glu-tRNA(Gln). The polypeptide is Aspartyl/glutamyl-tRNA(Asn/Gln) amidotransferase subunit C (Cereibacter sphaeroides (strain ATCC 17023 / DSM 158 / JCM 6121 / CCUG 31486 / LMG 2827 / NBRC 12203 / NCIMB 8253 / ATH 2.4.1.) (Rhodobacter sphaeroides)).